The primary structure comprises 662 residues: Histidine decarboxylase (662 aa).

Positions 88 and 201 each coordinate substrate. K312 bears the N6-(pyridoxal phosphate)lysine mark. The segment at 489-518 is disordered; sequence QPSPRAKNVIPPPPGTRGLSLESVSEGGDD.

This sequence belongs to the group II decarboxylase family. In terms of assembly, homodimer. Requires pyridoxal 5'-phosphate as cofactor.

The catalysed reaction is L-histidine + H(+) = histamine + CO2. It participates in amine and polyamine biosynthesis; histamine biosynthesis; histamine from L-histidine: step 1/1. Catalyzes the biosynthesis of histamine from histidine. The protein is Histidine decarboxylase (Hdc) of Mus musculus (Mouse).